Consider the following 216-residue polypeptide: Adenylate kinase (216 aa).

11-16 (GSGKGT) serves as a coordination point for ATP. An NMP region spans residues 31–60 (ATGDLFRKAIECGDELGDTVKSYMERGELV). Residues threonine 32, arginine 37, 58-60 (ELV), 86-89 (GFPR), and glutamine 93 contribute to the AMP site. Residues 127–163 (GRWVCRSCQSPYQSGCAEVTKGKCSRCQGGLYQRPDD) are LID. Arginine 128 lines the ATP pocket. Zn(2+) is bound by residues cysteine 131, cysteine 134, cysteine 150, and cysteine 153. Residues arginine 160 and arginine 171 each contribute to the AMP site. Alanine 199 contacts ATP.

Belongs to the adenylate kinase family. In terms of assembly, monomer.

It localises to the cytoplasm. It catalyses the reaction AMP + ATP = 2 ADP. It participates in purine metabolism; AMP biosynthesis via salvage pathway; AMP from ADP: step 1/1. In terms of biological role, catalyzes the reversible transfer of the terminal phosphate group between ATP and AMP. Plays an important role in cellular energy homeostasis and in adenine nucleotide metabolism. This chain is Adenylate kinase, found in Dehalococcoides mccartyi (strain CBDB1).